A 746-amino-acid polypeptide reads, in one-letter code: Polyribonucleotide nucleotidyltransferase (746 aa).

Positions 490 and 496 each coordinate Mg(2+). Residues 557–619 enclose the KH domain; it reads PRIETMIIGK…ATIDAAVKAI (63 aa). Residues 629–699 form the S1 motif domain; the sequence is GEVYEGKISS…KTGKFKLSRK (71 aa). The disordered stretch occupies residues 701–746; sequence LLPKPEGYEERPPRPERGERGPRQDRGDRGPRQDRGDRGPRREYRD. Positions 706-746 are enriched in basic and acidic residues; that stretch reads EGYEERPPRPERGERGPRQDRGDRGPRQDRGDRGPRREYRD.

This sequence belongs to the polyribonucleotide nucleotidyltransferase family. Requires Mg(2+) as cofactor.

It localises to the cytoplasm. It catalyses the reaction RNA(n+1) + phosphate = RNA(n) + a ribonucleoside 5'-diphosphate. In terms of biological role, involved in mRNA degradation. Catalyzes the phosphorolysis of single-stranded polyribonucleotides processively in the 3'- to 5'-direction. This is Polyribonucleotide nucleotidyltransferase from Parabacteroides distasonis (strain ATCC 8503 / DSM 20701 / CIP 104284 / JCM 5825 / NCTC 11152).